The following is a 365-amino-acid chain: Cobalt-precorrin-5B C(1)-methyltransferase (365 aa).

The protein belongs to the CbiD family.

The catalysed reaction is Co-precorrin-5B + S-adenosyl-L-methionine = Co-precorrin-6A + S-adenosyl-L-homocysteine. It participates in cofactor biosynthesis; adenosylcobalamin biosynthesis; cob(II)yrinate a,c-diamide from sirohydrochlorin (anaerobic route): step 6/10. Catalyzes the methylation of C-1 in cobalt-precorrin-5B to form cobalt-precorrin-6A. This Pseudomonas fluorescens (strain ATCC BAA-477 / NRRL B-23932 / Pf-5) protein is Cobalt-precorrin-5B C(1)-methyltransferase.